A 432-amino-acid chain; its full sequence is Histidinol dehydrogenase (432 aa).

NAD(+) contacts are provided by tyrosine 130, glutamine 191, and asparagine 214. Residues serine 237, glutamine 259, and histidine 262 each contribute to the substrate site. Residues glutamine 259 and histidine 262 each contribute to the Zn(2+) site. Active-site proton acceptor residues include glutamate 327 and histidine 328. Substrate is bound by residues histidine 328, aspartate 361, glutamate 415, and histidine 420. Residue aspartate 361 coordinates Zn(2+). Histidine 420 contributes to the Zn(2+) binding site.

Belongs to the histidinol dehydrogenase family. Requires Zn(2+) as cofactor.

The enzyme catalyses L-histidinol + 2 NAD(+) + H2O = L-histidine + 2 NADH + 3 H(+). The protein operates within amino-acid biosynthesis; L-histidine biosynthesis; L-histidine from 5-phospho-alpha-D-ribose 1-diphosphate: step 9/9. In terms of biological role, catalyzes the sequential NAD-dependent oxidations of L-histidinol to L-histidinaldehyde and then to L-histidine. This chain is Histidinol dehydrogenase, found in Agrobacterium fabrum (strain C58 / ATCC 33970) (Agrobacterium tumefaciens (strain C58)).